The following is a 398-amino-acid chain: Probable L-tyrosine/L-aspartate decarboxylase (398 aa).

N6-(pyridoxal phosphate)lysine is present on Lys-242.

Belongs to the group II decarboxylase family. MfnA subfamily. Pyridoxal 5'-phosphate is required as a cofactor.

It carries out the reaction L-tyrosine + H(+) = tyramine + CO2. It catalyses the reaction L-aspartate + H(+) = beta-alanine + CO2. It participates in cofactor biosynthesis; methanofuran biosynthesis. The protein operates within cofactor biosynthesis; coenzyme A biosynthesis. Functionally, catalyzes the decarboxylation of L-tyrosine to produce tyramine for methanofuran biosynthesis. Can also catalyze the decarboxylation of L-aspartate to produce beta-alanine for coenzyme A (CoA) biosynthesis. The protein is Probable L-tyrosine/L-aspartate decarboxylase of Methanosarcina mazei (strain ATCC BAA-159 / DSM 3647 / Goe1 / Go1 / JCM 11833 / OCM 88) (Methanosarcina frisia).